We begin with the raw amino-acid sequence, 102 residues long: Small ribosomal subunit protein uS10 (102 aa).

It belongs to the universal ribosomal protein uS10 family. Part of the 30S ribosomal subunit.

Functionally, involved in the binding of tRNA to the ribosomes. This is Small ribosomal subunit protein uS10 from Methanospirillum hungatei JF-1 (strain ATCC 27890 / DSM 864 / NBRC 100397 / JF-1).